Here is a 325-residue protein sequence, read N- to C-terminus: Lactonase drp35 (325 aa).

Residues Glu-46, Thr-108, Gly-110, Asp-128, Thr-131, Tyr-133, Asp-136, Asn-183, Asp-234, and Ser-235 each coordinate Ca(2+). Asp-234 serves as the catalytic Proton donor.

The protein belongs to the SMP-30/CGR1 family. Ca(2+) serves as cofactor.

It is found in the cytoplasm. Functionally, exhibits lactonase activity. Acts in cells with perturbed membrane integrity and is possibly related to the membrane homeostasis. The chain is Lactonase drp35 (drp35) from Staphylococcus epidermidis (strain ATCC 35984 / DSM 28319 / BCRC 17069 / CCUG 31568 / BM 3577 / RP62A).